Here is a 485-residue protein sequence, read N- to C-terminus: Glutamate--tRNA ligase (485 aa).

The 'HIGH' region motif lies at 11 to 21 (PSPTGHLHIGN). Residues 252–256 (KLSKR) carry the 'KMSKS' region motif. Lys-255 is an ATP binding site.

Belongs to the class-I aminoacyl-tRNA synthetase family. Glutamate--tRNA ligase type 1 subfamily. As to quaternary structure, monomer.

The protein localises to the cytoplasm. The catalysed reaction is tRNA(Glu) + L-glutamate + ATP = L-glutamyl-tRNA(Glu) + AMP + diphosphate. Catalyzes the attachment of glutamate to tRNA(Glu) in a two-step reaction: glutamate is first activated by ATP to form Glu-AMP and then transferred to the acceptor end of tRNA(Glu). The protein is Glutamate--tRNA ligase of Bacillus cereus (strain ATCC 14579 / DSM 31 / CCUG 7414 / JCM 2152 / NBRC 15305 / NCIMB 9373 / NCTC 2599 / NRRL B-3711).